The primary structure comprises 245 residues: Adenosylcobinamide-GDP ribazoletransferase (245 aa).

Transmembrane regions (helical) follow at residues 35 to 55 (WFPL…ALGL), 108 to 128 (IGAF…IGAH), 137 to 157 (GVLI…AALV), 176 to 196 (IAIG…TPVM), 197 to 217 (TTVT…HLAR), and 222 to 242 (INGD…LLAA).

This sequence belongs to the CobS family. Requires Mg(2+) as cofactor.

It localises to the cell inner membrane. It carries out the reaction alpha-ribazole + adenosylcob(III)inamide-GDP = adenosylcob(III)alamin + GMP + H(+). The enzyme catalyses alpha-ribazole 5'-phosphate + adenosylcob(III)inamide-GDP = adenosylcob(III)alamin 5'-phosphate + GMP + H(+). The protein operates within cofactor biosynthesis; adenosylcobalamin biosynthesis; adenosylcobalamin from cob(II)yrinate a,c-diamide: step 7/7. Its function is as follows. Joins adenosylcobinamide-GDP and alpha-ribazole to generate adenosylcobalamin (Ado-cobalamin). Also synthesizes adenosylcobalamin 5'-phosphate from adenosylcobinamide-GDP and alpha-ribazole 5'-phosphate. This chain is Adenosylcobinamide-GDP ribazoletransferase, found in Nitratidesulfovibrio vulgaris (strain DP4) (Desulfovibrio vulgaris).